A 77-amino-acid chain; its full sequence is Acyl carrier protein (77 aa).

The Carrier domain maps to 2-77 (SDVAKRVKEI…DAIDYITEHT (76 aa)). At serine 37 the chain carries O-(pantetheine 4'-phosphoryl)serine.

Belongs to the acyl carrier protein (ACP) family. 4'-phosphopantetheine is transferred from CoA to a specific serine of apo-ACP by AcpS. This modification is essential for activity because fatty acids are bound in thioester linkage to the sulfhydryl of the prosthetic group.

Its subcellular location is the cytoplasm. It functions in the pathway lipid metabolism; fatty acid biosynthesis. Carrier of the growing fatty acid chain in fatty acid biosynthesis. This chain is Acyl carrier protein, found in Trichlorobacter lovleyi (strain ATCC BAA-1151 / DSM 17278 / SZ) (Geobacter lovleyi).